Reading from the N-terminus, the 589-residue chain is Early growth response protein 4 (589 aa).

3 disordered regions span residues 29-101 (GSAL…HSRR), 383-411 (AEGL…ASTQ), and 436-466 (PGSS…GRRG). Over residues 76 to 86 (PLPPASPPPAR) the composition is skewed to pro residues. Basic residues predominate over residues 92-101 (ARPRAPHSRR). The span at 395-404 (GEGGSSGDGG) shows a compositional bias: gly residues. Residues 444 to 454 (PPVPPPPPTPF) show a composition bias toward pro residues. 3 consecutive C2H2-type zinc fingers follow at residues 483 to 507 (FACP…LRIH), 513 to 535 (FQCR…VRTH), and 541 to 563 (FACD…SKVH).

It belongs to the EGR C2H2-type zinc-finger protein family.

The protein resides in the nucleus. In terms of biological role, transcriptional regulator. Recognizes and binds to the DNA sequence 5'-GCGGGGGCG-3' (GSG). Activates the transcription of target genes whose products are required for mitogenesis and differentiation. The chain is Early growth response protein 4 (EGR4) from Homo sapiens (Human).